A 157-amino-acid chain; its full sequence is Thioredoxin 2 (157 aa).

The N-terminal stretch at 1–23 (MKKYIFFFLFSFINFFFVYDVTC) is a signal peptide. The Thioredoxin domain occupies 46-157 (LRMFKKVPRL…DLIALIKKHL (112 aa)). Catalysis depends on nucleophile residues Cys-82 and Cys-85. Cys-82 and Cys-85 form a disulfide bridge.

The protein belongs to the thioredoxin family. Monomer. Component of the Plasmodium translocon of exported proteins (PTEX) complex composed of HSP101, EXP2, PTEX150, PTEX88 and TRX2. The disulfide bond between Cys-82 and Cys-85 acts as a redox-active center and is reduced by thioredoxin reductase TRXR.

The protein resides in the parasitophorous vacuole membrane. In terms of biological role, participates in various redox reactions through the reversible oxidation of its active center dithiol to a disulfide and catalyzes dithiol-disulfide exchange reactions. As part of the translocon PTEX complex, plays a role in the export of parasite proteins into the host erythrocyte. The translocon PTEX complex is a multi-protein machinery resident in the parasite parasitophorous vacuolar membrane, responsible for protein secretion into host cells. May contribute to the unfolding of proteins containing the PEXEL localization motif before their passage through the translocon or regulate the PTEX complex function. The polypeptide is Thioredoxin 2 (Plasmodium falciparum (isolate 3D7)).